Reading from the N-terminus, the 316-residue chain is Pantothenate kinase (316 aa).

Gly-95 to Ser-102 contacts ATP.

This sequence belongs to the prokaryotic pantothenate kinase family.

The protein localises to the cytoplasm. It carries out the reaction (R)-pantothenate + ATP = (R)-4'-phosphopantothenate + ADP + H(+). It participates in cofactor biosynthesis; coenzyme A biosynthesis; CoA from (R)-pantothenate: step 1/5. In Shewanella woodyi (strain ATCC 51908 / MS32), this protein is Pantothenate kinase.